We begin with the raw amino-acid sequence, 85 residues long: Elongation factor 1-beta (85 aa).

The protein belongs to the EF-1-beta/EF-1-delta family.

Its function is as follows. Promotes the exchange of GDP for GTP in EF-1-alpha/GDP, thus allowing the regeneration of EF-1-alpha/GTP that could then be used to form the ternary complex EF-1-alpha/GTP/AAtRNA. The protein is Elongation factor 1-beta of Methanosphaerula palustris (strain ATCC BAA-1556 / DSM 19958 / E1-9c).